We begin with the raw amino-acid sequence, 456 residues long: Divalent metal cation transporter MntH (456 aa).

11 helical membrane-spanning segments follow: residues 47–67, 77–97, 123–143, 151–171, 184–204, 227–247, 276–296, 316–336, 369–389, 392–412, and 422–442; these read ALSF…PGNW, FGYA…LLQA, AWPL…AEVI, LLFG…VLLV, ALII…IIMA, MLYI…LYLH, IALT…AASF, PLLG…CCGL, FVAI…GTTE, ILSQ…LVIF, and LAAA…IVVL.

Belongs to the NRAMP family.

The protein resides in the cell inner membrane. Its function is as follows. H(+)-stimulated, divalent metal cation uptake system. The sequence is that of Divalent metal cation transporter MntH from Brucella suis biovar 1 (strain 1330).